A 598-amino-acid polypeptide reads, in one-letter code: Elongation factor 4 (598 aa).

The 183-residue stretch at 2–184 (TKIRNFSIIA…AVVDRIPPPS (183 aa)) folds into the tr-type G domain. GTP-binding positions include 14–19 (DHGKST) and 131–134 (NKID).

This sequence belongs to the TRAFAC class translation factor GTPase superfamily. Classic translation factor GTPase family. LepA subfamily.

Its subcellular location is the cell inner membrane. It catalyses the reaction GTP + H2O = GDP + phosphate + H(+). Its function is as follows. Required for accurate and efficient protein synthesis under certain stress conditions. May act as a fidelity factor of the translation reaction, by catalyzing a one-codon backward translocation of tRNAs on improperly translocated ribosomes. Back-translocation proceeds from a post-translocation (POST) complex to a pre-translocation (PRE) complex, thus giving elongation factor G a second chance to translocate the tRNAs correctly. Binds to ribosomes in a GTP-dependent manner. The sequence is that of Elongation factor 4 from Syntrophobacter fumaroxidans (strain DSM 10017 / MPOB).